A 274-amino-acid chain; its full sequence is MSLSETVEPSGIVELAVRRRRGDAAETAVDRVGQEWPVALVFNGISHAVMMCTPRDLEAFAVGFAVSEGIVERGSDVKDIEVALHGAGPLPHAEVQLTVVQQAFAALKEKRRALAGRTGCGVCGIESIGLLDLVPQRLPDTGFLARLAPDAIARAARELPAHQALTRQTGGLHAAAWCDASGAIVHAFEDIGRHNALDKLIGTLTLTRADMANGFVFLSSRASYELVRKSARVGIPMVATISAPSSLAIEIARQAGLRLVSFCREAGYVDYGTA.

C120 serves as the catalytic Cysteine persulfide intermediate.

Belongs to the FdhD family.

Its subcellular location is the cytoplasm. Its function is as follows. Required for formate dehydrogenase (FDH) activity. Acts as a sulfur carrier protein that transfers sulfur from IscS to the molybdenum cofactor prior to its insertion into FDH. This chain is Sulfur carrier protein FdhD, found in Burkholderia mallei (strain ATCC 23344).